Here is a 95-residue protein sequence, read N- to C-terminus: Cell division topological specificity factor (95 aa).

Belongs to the MinE family.

Its function is as follows. Prevents the cell division inhibition by proteins MinC and MinD at internal division sites while permitting inhibition at polar sites. This ensures cell division at the proper site by restricting the formation of a division septum at the midpoint of the long axis of the cell. The protein is Cell division topological specificity factor of Trichodesmium erythraeum (strain IMS101).